We begin with the raw amino-acid sequence, 463 residues long: Carnosine N-methyltransferase (463 aa).

2 disordered regions span residues methionine 1–lysine 64 and lysine 79–glutamate 104. A compositionally biased stretch (low complexity) spans lysine 9–asparagine 58. Over residues lysine 79–aspartate 93 the composition is skewed to basic and acidic residues. The segment covering aspartate 94 to glutamate 103 has biased composition (acidic residues). The S-adenosyl-L-methionine site is built by glutamine 215, arginine 218, glycine 260, glutamate 281, aspartate 351, phenylalanine 352, and cysteine 367. Aspartate 371 contacts carnosine. Residue tyrosine 379 participates in S-adenosyl-L-methionine binding. 2 residues coordinate carnosine: histidine 402 and tyrosine 450.

Belongs to the carnosine N-methyltransferase family.

It catalyses the reaction carnosine + S-adenosyl-L-methionine = anserine + S-adenosyl-L-homocysteine + H(+). In terms of biological role, N-methyltransferase that mediates the formation of anserine (beta-alanyl-N(Pi)-methyl-L-histidine) from carnosine. The chain is Carnosine N-methyltransferase from Dictyostelium discoideum (Social amoeba).